Reading from the N-terminus, the 289-residue chain is Iodotyrosine deiodinase 1 (289 aa).

Residues 1-21 (MFLLTPVLVAVVCILMVWIFK) traverse the membrane as a helical segment. FMN-binding positions include 100 to 104 (RRSVR) and 128 to 129 (SG). 3,5-diiodo-L-tyrosine-binding residues include A130, E157, Y161, and K182. Residues A130, E157, Y161, and K182 each contribute to the 3-iodo-L-tyrosine site. FMN-binding positions include 237–239 (TTT) and R279.

It belongs to the nitroreductase family. In terms of assembly, homodimer. Requires FMN as cofactor. As to expression, detected in thyroid (at protein level).

It localises to the cell membrane. The protein resides in the cytoplasmic vesicle membrane. The catalysed reaction is 2 iodide + L-tyrosine + 2 NADP(+) = 3,5-diiodo-L-tyrosine + 2 NADPH + H(+). It carries out the reaction iodide + L-tyrosine + NADP(+) = 3-iodo-L-tyrosine + NADPH. It catalyses the reaction 3-iodo-L-tyrosine + iodide + NADP(+) = 3,5-diiodo-L-tyrosine + NADPH + H(+). The enzyme catalyses L-tyrosine + chloride + NADP(+) = 3-chloro-L-tyrosine + NADPH. The catalysed reaction is bromide + L-tyrosine + NADP(+) = 3-bromo-L-tyrosine + NADPH. Functionally, catalyzes the dehalogenation of halotyrosines such as 3-bromo-L-tyrosine, 3-chloro-L-tyrosine, 3-iodo-L-tyrosine and 3,5-diiodo-L-tyrosine. During thyroid hormone biosynthesis, facilitates iodide salvage by catalysing the oxidative NADPH-dependent deiodination of the halogenated by-products of thyroid hormone production, monoiodotyrosine (L-MIT) and diiodotyrosine (L-DIT). The scavanged iodide can then reenter the hormone-producing pathways. Acts more efficiently on 3-iodo-L-tyrosine than 3,5-diiodo-L-tyrosine. The sequence is that of Iodotyrosine deiodinase 1 (IYD) from Sus scrofa (Pig).